The sequence spans 423 residues: Serine hydroxymethyltransferase (423 aa).

Residues Leu118 and 122 to 124 (GHL) contribute to the (6S)-5,6,7,8-tetrahydrofolate site. Lys227 carries the post-translational modification N6-(pyridoxal phosphate)lysine. Residue 351-353 (SPF) coordinates (6S)-5,6,7,8-tetrahydrofolate.

This sequence belongs to the SHMT family. As to quaternary structure, homodimer. Requires pyridoxal 5'-phosphate as cofactor.

It is found in the cytoplasm. The enzyme catalyses (6R)-5,10-methylene-5,6,7,8-tetrahydrofolate + glycine + H2O = (6S)-5,6,7,8-tetrahydrofolate + L-serine. It participates in one-carbon metabolism; tetrahydrofolate interconversion. It functions in the pathway amino-acid biosynthesis; glycine biosynthesis; glycine from L-serine: step 1/1. Its function is as follows. Catalyzes the reversible interconversion of serine and glycine with tetrahydrofolate (THF) serving as the one-carbon carrier. This reaction serves as the major source of one-carbon groups required for the biosynthesis of purines, thymidylate, methionine, and other important biomolecules. Also exhibits THF-independent aldolase activity toward beta-hydroxyamino acids, producing glycine and aldehydes, via a retro-aldol mechanism. The polypeptide is Serine hydroxymethyltransferase (Petrotoga mobilis (strain DSM 10674 / SJ95)).